A 161-amino-acid polypeptide reads, in one-letter code: MAEVANNEQQAPQFNIQRVYTKDVSFETPNSPAVFQKEWNPEVKLDLDTRSAKLADDVYEVVLSLTVTAQNGGDTAFLCEVQQAGIFSITGLTEPQLAHSLGAYCPNFLFPYARETVGSLVGRGTFPQLNLAPVNFDALFAQYVQQRQAAATAPAAEEANA.

This sequence belongs to the SecB family. As to quaternary structure, homotetramer, a dimer of dimers. One homotetramer interacts with 1 SecA dimer.

The protein resides in the cytoplasm. Its function is as follows. One of the proteins required for the normal export of preproteins out of the cell cytoplasm. It is a molecular chaperone that binds to a subset of precursor proteins, maintaining them in a translocation-competent state. It also specifically binds to its receptor SecA. The polypeptide is Protein-export protein SecB (Shewanella baltica (strain OS155 / ATCC BAA-1091)).